The primary structure comprises 248 residues: Deoxyribose-phosphate aldolase (248 aa).

Residue aspartate 117 is the Proton donor/acceptor of the active site. The active-site Schiff-base intermediate with acetaldehyde is the lysine 179. Residue lysine 208 is the Proton donor/acceptor of the active site.

The protein belongs to the DeoC/FbaB aldolase family. DeoC type 1 subfamily.

The protein resides in the cytoplasm. It catalyses the reaction 2-deoxy-D-ribose 5-phosphate = D-glyceraldehyde 3-phosphate + acetaldehyde. Its pathway is carbohydrate degradation; 2-deoxy-D-ribose 1-phosphate degradation; D-glyceraldehyde 3-phosphate and acetaldehyde from 2-deoxy-alpha-D-ribose 1-phosphate: step 2/2. Catalyzes a reversible aldol reaction between acetaldehyde and D-glyceraldehyde 3-phosphate to generate 2-deoxy-D-ribose 5-phosphate. This Thermotoga petrophila (strain ATCC BAA-488 / DSM 13995 / JCM 10881 / RKU-1) protein is Deoxyribose-phosphate aldolase.